Reading from the N-terminus, the 696-residue chain is Probable transporter efuK (696 aa).

Residues Ser603–Phe642 form a disordered region. Over residues Ala615 to Asn633 the composition is skewed to basic and acidic residues.

The protein belongs to the OSBP family.

In terms of biological role, probable transporter; part of the gene cluster that mediates the biosynthesis of enfumafungin, a glycosylated fernene-type triterpenoid with potent antifungal activity, mediated by its interaction with beta-1,3-glucan synthase and the fungal cell wall. Might be involved in transport of enfumafungin to and across organelle membranes. This Hormonema carpetanum protein is Probable transporter efuK.